The sequence spans 171 residues: Ribosome maturation factor RimM (171 aa).

The PRC barrel domain occupies 96–170; the sequence is PDSYYHFQLE…TMTVRLPDGL (75 aa).

The protein belongs to the RimM family. In terms of assembly, binds ribosomal protein uS19.

The protein localises to the cytoplasm. Functionally, an accessory protein needed during the final step in the assembly of 30S ribosomal subunit, possibly for assembly of the head region. Essential for efficient processing of 16S rRNA. May be needed both before and after RbfA during the maturation of 16S rRNA. It has affinity for free ribosomal 30S subunits but not for 70S ribosomes. The protein is Ribosome maturation factor RimM of Heliobacterium modesticaldum (strain ATCC 51547 / Ice1).